A 388-amino-acid chain; its full sequence is Chaperone protein DnaJ (388 aa).

A J domain is found at 5 to 69 (DYYDVLGVDK…QKKAQYDQFG (65 aa)). The segment at 145-227 (GKKTDITYTR…CHGKGTIDKK (83 aa)) adopts a CR-type zinc-finger fold. Residues Cys-158, Cys-161, Cys-175, Cys-178, Cys-201, Cys-204, Cys-215, and Cys-218 each coordinate Zn(2+). CXXCXGXG motif repeat units lie at residues 158-165 (CPTCDGSG), 175-182 (CDKCHGTG), 201-208 (CDKCGGRG), and 215-222 (CQTCHGKG).

Belongs to the DnaJ family. As to quaternary structure, homodimer. The cofactor is Zn(2+).

Its subcellular location is the cytoplasm. Functionally, participates actively in the response to hyperosmotic and heat shock by preventing the aggregation of stress-denatured proteins and by disaggregating proteins, also in an autonomous, DnaK-independent fashion. Unfolded proteins bind initially to DnaJ; upon interaction with the DnaJ-bound protein, DnaK hydrolyzes its bound ATP, resulting in the formation of a stable complex. GrpE releases ADP from DnaK; ATP binding to DnaK triggers the release of the substrate protein, thus completing the reaction cycle. Several rounds of ATP-dependent interactions between DnaJ, DnaK and GrpE are required for fully efficient folding. Also involved, together with DnaK and GrpE, in the DNA replication of plasmids through activation of initiation proteins. This chain is Chaperone protein DnaJ, found in Lactobacillus gasseri (strain ATCC 33323 / DSM 20243 / BCRC 14619 / CIP 102991 / JCM 1131 / KCTC 3163 / NCIMB 11718 / NCTC 13722 / AM63).